A 144-amino-acid polypeptide reads, in one-letter code: Interferon-induced transmembrane protein 2 (144 aa).

Met1 bears the N-acetylmethionine mark. The Cytoplasmic portion of the chain corresponds to 1–56; the sequence is MSHNSQAFLSTNAGLPPSYETIKEEYGVTELGEPSNSAVVRTTVINMPREVSVPDH. Tyr19 carries the phosphotyrosine modification. The segment at residues 57-77 is an intramembrane region (helical); the sequence is VVWSLFNTLFFNACCLGFVAY. Residues Cys70, Cys71, and Cys104 are each lipidated (S-palmitoyl cysteine). The Cytoplasmic portion of the chain corresponds to 78–110; that stretch reads AYSVKSRDRKMVGDVVGAQAYASTAKCLNISSL. The helical transmembrane segment at 111 to 131 threads the bilayer; sequence IFSILMVIICIIIFSTTSVVV. Residues 132-144 are Extracellular-facing; sequence FQSFAQRTPHSGF.

This sequence belongs to the CD225/Dispanin family. Interacts with CD81. In terms of processing, palmitoylation on membrane-proximal cysteines controls clustering in membrane compartments and antiviral activity. Post-translationally, phosphorylation at Tyr-19 is required for endosomal and lysosomal location. In terms of tissue distribution, predominantly expressed in nascent primordial germ cells, as well as in gonadal germ cells.

Its subcellular location is the cell membrane. It localises to the lysosome membrane. The protein localises to the late endosome membrane. Functionally, IFN-induced antiviral protein which inhibits the entry of viruses to the host cell cytoplasm, permitting endocytosis, but preventing subsequent viral fusion and release of viral contents into the cytosol. Active against multiple viruses, including influenza A virus, SARS coronavirus (SARS-CoV), Marburg virus (MARV) and Ebola virus (EBOV), Dengue virus (DNV) and West Nile virus (WNV). Can inhibit: influenza virus hemagglutinin protein-mediated viral entry, MARV and EBOV GP1,2-mediated viral entry and SARS-CoV S protein-mediated viral entry. Induces cell cycle arrest and mediates apoptosis by caspase activation and in p53-independent manner. The sequence is that of Interferon-induced transmembrane protein 2 (Ifitm2) from Mus musculus (Mouse).